Consider the following 159-residue polypeptide: MMKFFEYNWQVRDQWFTWCHQLTTEELLKNRLGGVENILYTLFHIIDVEYSWIRAIQGKEDIAVQFADYQTLNKVKSLSNTFRTEIIDVLQTHSDQIKDELVSVPWETGVLYTRDEILHHIIAHEIHHIGQLSVWARELKLSPVSASFIGRTLKPIHSY.

The a divalent metal cation site is built by His44, His124, and His128.

This sequence belongs to the DinB family.

This is an uncharacterized protein from Bacillus subtilis (strain 168).